Reading from the N-terminus, the 662-residue chain is Glycogen debranching enzyme (662 aa).

Asp338 acts as the Nucleophile in catalysis. Glu373 (proton donor) is an active-site residue.

It belongs to the glycosyl hydrolase 13 family.

The catalysed reaction is Hydrolysis of (1-&gt;6)-alpha-D-glucosidic linkages to branches with degrees of polymerization of three or four glucose residues in limit dextrin.. It participates in glycan degradation; glycogen degradation. In terms of biological role, removes maltotriose and maltotetraose chains that are attached by 1,6-alpha-linkage to the limit dextrin main chain, generating a debranched limit dextrin. This chain is Glycogen debranching enzyme, found in Yersinia pestis bv. Antiqua (strain Angola).